The following is a 266-amino-acid chain: Signal peptidase I (266 aa).

Residues 1–20 (MQTDNTKSNTNKTAKQEWGS) lie on the Cytoplasmic side of the membrane. A helical transmembrane segment spans residues 21-41 (FAFVICIALLIRILIMEPFTV). Residues 42 to 266 (PTGSMKATIL…IFRNLYSTDE (225 aa)) are Periplasmic-facing. Active-site residues include S45 and K108.

Belongs to the peptidase S26 family.

It localises to the cell inner membrane. It catalyses the reaction Cleavage of hydrophobic, N-terminal signal or leader sequences from secreted and periplasmic proteins.. This Rickettsia felis (strain ATCC VR-1525 / URRWXCal2) (Rickettsia azadi) protein is Signal peptidase I (lepB).